The chain runs to 141 residues: D-aminoacyl-tRNA deacylase (141 aa).

Positions G133 to P134 match the Gly-cisPro motif, important for rejection of L-amino acids motif.

The protein belongs to the DTD family. In terms of assembly, homodimer.

The protein localises to the cytoplasm. The catalysed reaction is glycyl-tRNA(Ala) + H2O = tRNA(Ala) + glycine + H(+). It catalyses the reaction a D-aminoacyl-tRNA + H2O = a tRNA + a D-alpha-amino acid + H(+). In terms of biological role, an aminoacyl-tRNA editing enzyme that deacylates mischarged D-aminoacyl-tRNAs. Also deacylates mischarged glycyl-tRNA(Ala), protecting cells against glycine mischarging by AlaRS. Acts via tRNA-based rather than protein-based catalysis; rejects L-amino acids rather than detecting D-amino acids in the active site. By recycling D-aminoacyl-tRNA to D-amino acids and free tRNA molecules, this enzyme counteracts the toxicity associated with the formation of D-aminoacyl-tRNA entities in vivo and helps enforce protein L-homochirality. This chain is D-aminoacyl-tRNA deacylase, found in Streptomyces coelicolor (strain ATCC BAA-471 / A3(2) / M145).